We begin with the raw amino-acid sequence, 151 residues long: Ubiquitin-conjugating enzyme E2 2 (151 aa).

Residues 1 to 26 (MSTTARRRLMRDFKRMQQDPPQGVSA) are disordered. Residues 4 to 150 (TARRRLMRDF…VRDTVEASWT (147 aa)) form the UBC core domain. The active-site Glycyl thioester intermediate is Cys-88.

Belongs to the ubiquitin-conjugating enzyme family.

It localises to the cytoplasm. The protein localises to the nucleus. The catalysed reaction is S-ubiquitinyl-[E1 ubiquitin-activating enzyme]-L-cysteine + [E2 ubiquitin-conjugating enzyme]-L-cysteine = [E1 ubiquitin-activating enzyme]-L-cysteine + S-ubiquitinyl-[E2 ubiquitin-conjugating enzyme]-L-cysteine.. It participates in protein modification; protein ubiquitination. Functionally, catalyzes the covalent attachment of ubiquitin to other proteins. Plays a role in transcription regulation by catalyzing the monoubiquitination of histone H2B to form H2BK123ub1. H2BK123ub1 gives a specific tag for epigenetic transcriptional activation and is also a prerequisite for H3K4me and H3K79me formation. Also involved in postreplication repair of UV-damaged DNA, in N-end rule-dependent protein degradation and in sporulation. This is Ubiquitin-conjugating enzyme E2 2 (UBC2) from Yarrowia lipolytica (strain CLIB 122 / E 150) (Yeast).